A 1190-amino-acid chain; its full sequence is MGEEGPPSLEYIQAKDLFPPKELVKEEENLQVPFTVLQGEGVEFLGRATDALIAISNYRLHIKFKDSVINVPLRMIDSVESRDMFQLHIACKDSKVVRCHFSTFKQCQEWLSRLSRATARPAKPEDLFAFAYHAWCLGLTEEDQHTHLCQPGEHIRCRQEAELARMGFDLQNVWRVSHINSNYKLCPSYPQKLLVPVWITDKELENVASFRSWKRIPVVVYRHLRNGAAIARCSQPEISWWGWRNADDEYLVTSIAKACALDPGTRASGGSLSTGTNDASEACDTDFDSSLTACSGVESTAAPQKLLILDARSYTAAVANRAKGGGCECEEYYPNCEVLFMGMANIHAIRNSFQYLRAVCSQMPDPSNWLSALESTKWLQHLSVMLKAAVLVANTVDREGRPVLVHCSDGWDRTPQIVALAKILLDPYYRTLEGFQVLVESDWLDFGHKFGDRCGHQENAEDQNEQCPVFLQWLDSVHQLLKQFPCLFEFNEAFLVKLVQHTYSCLYGTFLANNPCEREKRNIYKRTCSVWALLRAGNKNFHNFLYTPGSDVVLHPVCHVRALHLWTAVYLPASSPCTLGEENMDLYLSPVAQSQEFSGRSLDRLPKTRSMDDLLSACDTSSPLTRTSSDPNLNNHSQEVRGSLEPWHSSPEGAETVIDSGVGSPQLTVGEMGLPPPLPSSQKEYLSNKPFKGHKSCSLSYKLLNTSVSWEMKSNTSDIKVLEETEALAPDPSAQEEQGRTSDGLGKPPEQFLEKEAVSSLCSVSSKCGGACDFPEPPQDPLTGTPQQPHLDSMQISPSRCTPDHSQGSLCNPPSVASQTPEPNTDLLSQDPPGSTASISHQEQPSSVPDLIYKKEDAGKRGSKNGQLLENPRFGKMPLELARKPISQSQISEFSFLGSNWDSFQGMMTSFPSGETTPRRLLAYGCCSKRPSNKHIRAAGPCLGGQWAQREGMKSPVCSSHSNGHCTGPGGKNNRMWFSSHPKQVSSTKPSLLSCPSPVPPLYLDDDGLPFPTDVIQHRLRQIEAGYRQEVEQLRRQVRELQMRLDIRHCCAPPAEPPMDYEDDFTCLKESDGSDTEDFGSDHSEDCLSEASWEPVDKKETEVTRWVPDHMASHCFNCDCEFWLAKRRHHCRNCGNVFCAGCCHLKLPIPDQQLYDPVLVCNSCYEHIQVSRARELMSQHLKKPIATASS.

S8 carries the post-translational modification Phosphoserine. The 418-residue stretch at 153–570 (EHIRCRQEAE…RALHLWTAVY (418 aa)) folds into the Myotubularin phosphatase domain. A 1,2-diacyl-sn-glycero-3-phospho-(1D-myo-inositol-3,5-bisphosphate) is bound by residues N320, N345, and I346. A 1,2-diacyl-sn-glycero-3-phospho-(1D-myo-inositol-3-phosphate) is bound by residues N320, N345, and I346. C407 serves as the catalytic Phosphocysteine intermediate. A 1,2-diacyl-sn-glycero-3-phospho-(1D-myo-inositol-3,5-bisphosphate)-binding residues include S408, D409, G410, W411, D412, R413, K449, and R453. S408, D409, G410, W411, D412, and R413 together coordinate a 1,2-diacyl-sn-glycero-3-phospho-(1D-myo-inositol-3-phosphate). R453 is an a 1,2-diacyl-sn-glycero-3-phospho-(1D-myo-inositol-3-phosphate) binding site. Phosphoserine is present on residues S610 and S629. Disordered regions lie at residues 616 to 694 (SACD…FKGH), 724 to 749 (ETEA…GKPP), and 773 to 848 (DFPE…PSSV). Positions 618-637 (CDTSSPLTRTSSDPNLNNHS) are enriched in polar residues. The span at 782 to 847 (LTGTPQQPHL…SISHQEQPSS (66 aa)) shows a compositional bias: polar residues. The PY-motif; substrate motif for NEDD4 signature appears at 999–1003 (VPPLY). Positions 1020–1052 (LRQIEAGYRQEVEQLRRQVRELQMRLDIRHCCA) form a coiled coil. An FYVE-type zinc finger spans residues 1109–1169 (DHMASHCFNC…VCNSCYEHIQ (61 aa)). The Zn(2+) site is built by C1115, C1118, C1131, C1134, C1139, C1142, C1161, and C1164.

The protein belongs to the protein-tyrosine phosphatase family. Non-receptor class myotubularin subfamily. As to quaternary structure, homooligomeric. Forms MTMR3:MTMR4 heterooligomers; regulates the localization of both proteins. The MTMR3:MTMR4 heterooligomer can also recruit both CEP55 and PLK1; occurs during early mitosis, regulates the phosphorylation of CEP55 by PLK1 and its recruitment to the midbody where it can mediate cell abscission. Interacts with SMAD2 and SMAD3; negatively regulates TGF-beta signaling through SMAD2 and SMAD3 dephosphorylation and retention in endosomes. Interacts with SMAD1; negatively regulates BMP signaling through SMAD1 dephosphorylation and retention in endosomes. Ubiquitinated. Ubiquitination by NEDD4 probably leads to proteasomal degradation. In terms of processing, phosphorylated by CDK1 during mitosis.

The protein localises to the early endosome membrane. The protein resides in the recycling endosome membrane. Its subcellular location is the late endosome membrane. It localises to the cytoplasmic vesicle. It is found in the phagosome membrane. The enzyme catalyses a 1,2-diacyl-sn-glycero-3-phospho-(1D-myo-inositol-3-phosphate) + H2O = a 1,2-diacyl-sn-glycero-3-phospho-(1D-myo-inositol) + phosphate. It carries out the reaction a 1,2-diacyl-sn-glycero-3-phospho-(1D-myo-inositol-3,5-bisphosphate) + H2O = a 1,2-diacyl-sn-glycero-3-phospho-(1D-myo-inositol-5-phosphate) + phosphate. The catalysed reaction is 1,2-dioctanoyl-sn-glycero-3-phospho-(1-D-myo-inositol-3-phosphate) + H2O = 1,2-dioctanoyl-sn-glycero-3-phospho-(1D-myo-inositol) + phosphate. It catalyses the reaction 1,2-dioctanoyl-sn-glycero-3-phospho-(1D-myo-inositol-3,5-bisphosphate) + H2O = 1,2-dioctanoyl-sn-glycero-3-phospho-(1D-myo-inositol-5-phosphate) + phosphate. In terms of biological role, lipid phosphatase that specifically dephosphorylates the D-3 position of phosphatidylinositol 3-phosphate and phosphatidylinositol 3,5-bisphosphate, generating phosphatidylinositol and phosphatidylinositol 5-phosphate. Decreases the levels of phosphatidylinositol 3-phosphate, a phospholipid found in cell membranes where it acts as key regulator of both cell signaling and intracellular membrane traffic, in a subset of endosomal membranes to negatively regulate both endocytic recycling and trafficking and/or maturation of endosomes toward lysosomes. Through phosphatidylinositol 3-phosphate turnover in phagosome membranes regulates phagocytosis and phagosome maturation. By decreasing phosphatidylinositol 3-monophosphate (PI3P) levels in immune cells it can also regulate the innate immune response. Beside its lipid phosphatase activity, can also function as a molecular adapter to regulate midbody abscission during mitotic cytokinesis. Can also negatively regulate TGF-beta and BMP signaling through Smad proteins dephosphorylation and retention in endosomes. This is Phosphatidylinositol-3,5-bisphosphate 3-phosphatase MTMR4 from Mus musculus (Mouse).